The chain runs to 505 residues: Deoxyguanosinetriphosphate triphosphohydrolase (505 aa).

Residues 66 to 273 enclose the HD domain; it reads RLTHSMEVQQ…MEAADDISYC (208 aa).

This sequence belongs to the dGTPase family. Type 1 subfamily. In terms of assembly, homotetramer. The cofactor is Mg(2+).

The catalysed reaction is dGTP + H2O = 2'-deoxyguanosine + triphosphate + H(+). Its function is as follows. dGTPase preferentially hydrolyzes dGTP over the other canonical NTPs. This is Deoxyguanosinetriphosphate triphosphohydrolase from Shigella boydii serotype 18 (strain CDC 3083-94 / BS512).